Reading from the N-terminus, the 428-residue chain is Light-independent protochlorophyllide reductase subunit N (428 aa).

[4Fe-4S] cluster contacts are provided by Cys29, Cys54, and Cys115.

Belongs to the BchN/ChlN family. In terms of assembly, protochlorophyllide reductase is composed of three subunits; BchL, BchN and BchB. Forms a heterotetramer of two BchB and two BchN subunits. Requires [4Fe-4S] cluster as cofactor.

The catalysed reaction is chlorophyllide a + oxidized 2[4Fe-4S]-[ferredoxin] + 2 ADP + 2 phosphate = protochlorophyllide a + reduced 2[4Fe-4S]-[ferredoxin] + 2 ATP + 2 H2O. It participates in porphyrin-containing compound metabolism; bacteriochlorophyll biosynthesis (light-independent). Functionally, component of the dark-operative protochlorophyllide reductase (DPOR) that uses Mg-ATP and reduced ferredoxin to reduce ring D of protochlorophyllide (Pchlide) to form chlorophyllide a (Chlide). This reaction is light-independent. The NB-protein (BchN-BchB) is the catalytic component of the complex. The polypeptide is Light-independent protochlorophyllide reductase subunit N (Cereibacter sphaeroides (strain ATCC 17025 / ATH 2.4.3) (Rhodobacter sphaeroides)).